We begin with the raw amino-acid sequence, 954 residues long: DNA repair and telomere maintenance protein NBS1 (954 aa).

The region spanning 22–85 (YLFGRTVAEA…KGTLVNGVQI (64 aa)) is the FHA domain. BRCT domains follow at residues 107 to 186 (TLKI…NAIV) and 244 to 349 (GYTF…LEAI). Polar residues predominate over residues 368–377 (VSVSASVEPQ). Disordered stretches follow at residues 368–431 (VSVS…FKGF), 444–506 (QAQS…PLPE), 528–580 (IEAG…KQED), 630–654 (VRQP…WDPR), and 692–954 (GIGD…GRRR). The span at 378–393 (SSEKVRPAVEDRKEVE) shows a compositional bias: basic and acidic residues. Residues 416–428 (PHRRERRTGRSRF) show a composition bias toward basic residues. The span at 458–471 (PSASQDSLFVSQRE) shows a compositional bias: polar residues. A compositionally biased stretch (acidic residues) spans 541–554 (PEPEREDEDVEMVE). Composition is skewed to basic and acidic residues over residues 640 to 654 (RTRE…WDPR) and 704 to 715 (GRVPRRPKETQT). Low complexity predominate over residues 726 to 737 (DGSGFAAAAASG). Basic and acidic residues predominate over residues 738 to 751 (KGKEKDKENEKEVG). Low complexity-rich tracts occupy residues 801-815 (EVVS…ASEP) and 826-842 (RANA…SQTQ). The segment covering 936-945 (GSEEESEDDE) has biased composition (acidic residues).

It belongs to the Nibrin family. Component of the MRN complex composed of two heterodimers RAD50 and MRE11 associated with a single NBS1.

Its subcellular location is the nucleus. It is found in the chromosome. Functionally, component of the MRN complex, which plays a central role in double-strand break (DSB) repair, DNA recombination, maintenance of telomere integrity and meiosis. The MRN complex is involved in the repair of DNA double-strand breaks (DSBs) via homologous recombination (HR), an error-free mechanism which primarily occurs during S and G2 phases. The complex (1) mediates the end resection of damaged DNA, which generates proper single-stranded DNA, a key initial steps in HR, and is (2) required for the recruitment of other repair factors and efficient activation of ATM and ATR upon DNA damage. The MRN complex possesses single-strand endonuclease activity and double-strand-specific 3'-5' exonuclease activity, which are provided by MRE11, to initiate end resection, which is required for single-strand invasion and recombination. Within the MRN complex, NBS1 acts as a protein-protein adapter, which specifically recognizes and binds phosphorylated proteins, promoting their recruitment to DNA damage sites. Recruits MRE11 and RAD50 components of the MRN complex to DSBs in response to DNA damage. The chain is DNA repair and telomere maintenance protein NBS1 from Chaetomium thermophilum (strain DSM 1495 / CBS 144.50 / IMI 039719) (Thermochaetoides thermophila).